Consider the following 453-residue polypeptide: G-protein coupled receptor 39 (453 aa).

Residues 1–34 (MASPSLPGSDCSQIIDHSHVPEFEVATWIKITLI) lie on the Extracellular side of the membrane. Intrachain disulfides connect Cys-11/Cys-191 and Cys-108/Cys-210. His-17 and His-19 together coordinate Zn(2+). The helical transmembrane segment at 35–55 (LVYLIIFVMGLLGNSATIRVT) threads the bilayer. Topologically, residues 56–69 (QVLQKKGYLQKEVT) are cytoplasmic. The chain crosses the membrane as a helical span at residues 70–89 (DHMVSLACSDILVFLIGMPM). Residues 90 to 109 (EFYSIIWNPLTTSSYTLSCK) lie on the Extracellular side of the membrane. Residues 110-131 (LHTFLFEACSYATLLHVLTLSF) traverse the membrane as a helical segment. Residues 132–151 (ERYIAICHPFRYKAVSGPCQ) are Cytoplasmic-facing. The chain crosses the membrane as a helical span at residues 152 to 172 (VKLLIGFVWVTSALVALPLLF). The Extracellular segment spans residues 173-217 (AMGTEYPLVNVPSHRGLTCNRSSTRHHEQPETSNMSICTNLSSRW). N-linked (GlcNAc...) asparagine glycans are attached at residues Asn-192, Asn-206, and Asn-212. Residues 218–242 (TVFQSSIFGAFVVYLVVLLSVAFMC) traverse the membrane as a helical segment. At 243–283 (WNMMQVLMKSQKGSLAGGTRPPQLRKSESEESRTARRQTII) the chain is on the cytoplasmic side. Residues 255–274 (GSLAGGTRPPQLRKSESEES) are disordered. The chain crosses the membrane as a helical span at residues 284–305 (FLRLIVVTLAVCWMPNQIRRIM). The Extracellular portion of the chain corresponds to 306-323 (AAAKPKHDWTRSYFRAYM). Residues 324–344 (ILLPFSETFFYLSSVINPLLY) traverse the membrane as a helical segment. Topologically, residues 345–453 (TVSSQQFRRV…AENGFQEHEV (109 aa)) are cytoplasmic. Ser-396 carries the phosphoserine modification. Residues 415–453 (SEAEPQSKSQSLSLESLEPNSGAKPANSAAENGFQEHEV) are disordered. The segment covering 418–435 (EPQSKSQSLSLESLEPNS) has biased composition (low complexity).

It belongs to the G-protein coupled receptor 1 family. Interacts with HTR1A. Interacts with GALR1. As to expression, expressed in many tissues, including the stomach, intestine and hypothalamus.

The protein localises to the cell membrane. Functionally, zinc-sensing receptor that can sense changes in extracellular Zn(2+), mediate Zn(2+) signal transmission, and participates in the regulation of numerous physiological processes including glucose homeostasis regulation, gastrointestinal mobility, hormone secretion and cell death. Activation by Zn(2+) in keratinocytes increases the intracellular concentration of Ca(2+) and activates the ERK/MAPK and PI3K/AKT signaling pathways leading to epithelial repair. Plays an essential role in normal wound healing by inducing the production of cytokines including the major inflammatory cytokine IL6 via the PKC/MAPK/CEBPB pathway. Regulates adipose tissue metabolism, especially lipolysis, and regulates the function of lipases, such as hormone-sensitive lipase and adipose triglyceride lipase. Plays a role in the inhibition of cell death and protects against oxidative, endoplasmic reticulum and mitochondrial stress by inducing secretion of the cytoprotective pigment epithelium-derived growth factor (PEDF) and probably other protective transcripts in a GNA13/RHOA/SRE-dependent manner. Forms dynamic heteroreceptor complexes with HTR1A and GALR1 depending on cell type or specific physiological states, resulting in signaling diversity: HTR1A-GPR39 shows additive increase in signaling along the serum response element (SRE) and NF-kappa-B pathways while GALR1 acts as an antagonist blocking SRE. The protein is G-protein coupled receptor 39 (GPR39) of Homo sapiens (Human).